We begin with the raw amino-acid sequence, 355 residues long: Peptide chain release factor 1 (355 aa).

At Q233 the chain carries N5-methylglutamine. A compositionally biased stretch (basic and acidic residues) spans 281-293 (RRNKEQERADSRR). Positions 281–308 (RRNKEQERADSRRGQIGSGDRSERIRTY) are disordered.

This sequence belongs to the prokaryotic/mitochondrial release factor family. Methylated by PrmC. Methylation increases the termination efficiency of RF1.

It is found in the cytoplasm. Its function is as follows. Peptide chain release factor 1 directs the termination of translation in response to the peptide chain termination codons UAG and UAA. The sequence is that of Peptide chain release factor 1 from Rickettsia akari (strain Hartford).